The primary structure comprises 803 residues: Volume-regulated anion channel subunit LRRC8B (803 aa).

The Cytoplasmic portion of the chain corresponds to 1–25 (MITLTELKCLADAQSSYHILKPWWD). The chain crosses the membrane as a helical span at residues 26-46 (VFWYYITLIMLLVAVLAGALQ). The Extracellular portion of the chain corresponds to 47-119 (LTQSRVLCCL…YEKQLHWFAK (73 aa)). 2 disulfide bridges follow: Cys55–Cys304 and Cys109–Cys289. Asn78 is a glycosylation site (N-linked (GlcNAc...) asparagine). A helical transmembrane segment spans residues 120–140 (FFPYLVLLHTLIFAACSNFWL). Topologically, residues 141-261 (HYPSTSSRLE…DIIYRVYLKQ (121 aa)) are cytoplasmic. Residues Ser186 and Ser196 each carry the phosphoserine modification. The helical transmembrane segment at 262–282 (IIVKVILFVLIITYVPYFLTH) threads the bilayer. At 283–307 (ITLEIDCSVDVQAFTGYKRYQCVYS) the chain is on the extracellular side. A helical transmembrane segment spans residues 308–328 (LAEIFKVLASFYVILVILYGL). Topologically, residues 329–803 (TSSYSLWWML…ERLQTCLDKC (475 aa)) are cytoplasmic. 13 LRR repeats span residues 464-486 (NLKELRVYHSSLVVDHPALAFLE), 488-509 (NLKILRLKFTEMGKIPRWVFHL), 511-532 (NLKELYLSGCVLPEQLSTMQLE), 539-559 (NLRTLYLKSSLSRIPQVVTDL), 562-582 (SLQKLSLDNEGSKLVVLNNLK), 586-607 (NLKSLELISCDLERIPHSIFSL), 609-630 (NLHELDLRENNLKTVEEIISFQ), 634-655 (NLSCLKLWHNNIAYIPAQIGAL), 657-678 (NLEQLSLDHNNIENLPLQLFLC), 680-701 (KLHYLDLSYNHLTFIPEEIQYL), 703-724 (NLQYFAVTNNNIEMLPDGLFQC), 726-747 (KLQCLLLGKNSLMNLSPHVGEL), and 749-771 (NLTHLELIGNYLETLPPELEGCQ).

This sequence belongs to the LRRC8 family. In terms of assembly, heterohexamer; oligomerizes with other LRRC8 proteins (LRRC8A, LRRC8C, LRRC8D and/or LRRC8E) to form a heterohexamer. In vivo, the subunit composition may depend primarily on expression levels, and heterooligomeric channels containing various proportions of the different LRRC8 proteins may coexist.

The protein localises to the cell membrane. Its subcellular location is the endoplasmic reticulum membrane. The catalysed reaction is chloride(in) = chloride(out). The enzyme catalyses iodide(out) = iodide(in). It carries out the reaction taurine(out) = taurine(in). Its function is as follows. Non-essential component of the volume-regulated anion channel (VRAC, also named VSOAC channel), an anion channel required to maintain a constant cell volume in response to extracellular or intracellular osmotic changes. The VRAC channel conducts iodide better than chloride and can also conduct organic osmolytes like taurine. Channel activity requires LRRC8A plus at least one other family member (LRRC8B, LRRC8C, LRRC8D or LRRC8E); channel characteristics depend on the precise subunit composition. The chain is Volume-regulated anion channel subunit LRRC8B from Homo sapiens (Human).